We begin with the raw amino-acid sequence, 254 residues long: tRNA (guanine-N(1)-)-methyltransferase (254 aa).

Residues G114 and 134–139 (IGDYVL) each bind S-adenosyl-L-methionine.

This sequence belongs to the RNA methyltransferase TrmD family. As to quaternary structure, homodimer.

It localises to the cytoplasm. The enzyme catalyses guanosine(37) in tRNA + S-adenosyl-L-methionine = N(1)-methylguanosine(37) in tRNA + S-adenosyl-L-homocysteine + H(+). Specifically methylates guanosine-37 in various tRNAs. This is tRNA (guanine-N(1)-)-methyltransferase from Desulforamulus reducens (strain ATCC BAA-1160 / DSM 100696 / MI-1) (Desulfotomaculum reducens).